A 100-amino-acid chain; its full sequence is Small ribosomal subunit protein uS14 (100 aa).

It belongs to the universal ribosomal protein uS14 family. In terms of assembly, part of the 30S ribosomal subunit. Contacts proteins S3 and S10.

In terms of biological role, binds 16S rRNA, required for the assembly of 30S particles and may also be responsible for determining the conformation of the 16S rRNA at the A site. This chain is Small ribosomal subunit protein uS14, found in Synechococcus sp. (strain RCC307).